The following is a 513-amino-acid chain: Tyrosine-protein phosphatase non-receptor type substrate 1 (513 aa).

Positions 1–31 (MEPAGPAPGRLGPLLLCLLLSASCFCTGATG) are cleaved as a signal peptide. Residues 32 to 137 (KELKVTQPEK…SSEPDTEIQS (106 aa)) enclose the Ig-like V-type domain. Over 32 to 373 (KELKVTQPEK…PDNNATHNWN (342 aa)) the chain is Extracellular. N-linked (GlcNAc...) asparagine glycosylation is found at Asn54, Asn92, Asn168, Asn180, Asn205, Asn209, Asn246, Asn271, Asn293, Asn302, Asn312, Asn320, Asn345, and Asn367. Cys55 and Cys121 are joined by a disulfide. Ig-like C1-type domains are found at residues 149–248 (PSPP…ANLS) and 255–343 (PTVK…PAIT). Cysteines 171 and 229 form a disulfide. Cys274 and Cys332 are joined by a disulfide. A helical transmembrane segment spans residues 374-394 (VFIGVGVACALLVVLLMAALY). The Cytoplasmic segment spans residues 395–511 (LLRIKQKKAK…FSEYASVQVQ (117 aa)). Tyr440 is modified (phosphotyrosine; by Tyr-kinases). The short motif at 440–443 (YADL) is the SH2-binding element. The interval 444–513 (NLPKEKKPAP…EYASVQVQRK (70 aa)) is disordered. An SH3-binding motif is present at residues 450 to 455 (KPAPRA). 3 positions are modified to phosphotyrosine; by Tyr-kinases: Tyr464, Tyr481, and Tyr505. Short sequence motifs (SH2-binding) lie at residues 464–467 (YASI), 481–484 (YADL), and 505–508 (YASV). The segment covering 504–513 (EYASVQVQRK) has biased composition (polar residues).

In terms of assembly, binds PTPN11 when tyrosine-phosphorylated, except in macrophages, where it primarily binds PTPN6. Binds GRB2 vitro. Binds FGR. Binds JAK2 irrespective of its phosphorylation status and forms a stable complex. Binds SCAP1 and/or SCAP2. The resulting complex recruits FYB1. Binds PTK2B. Interacts with TRIM2. Post-translationally, N-glycosylated. In terms of processing, phosphorylated on tyrosine residues. As to expression, highly expressed in cerebral cortex, brain, spinal cord, cerebellum and spleen, and at much lower levels in kidney, thymus, heart, lung and liver. Within the cerebellum, highly expressed throughout the molecular layer, and in synaptic glomeruli in the granule cell layer. Detected in neurons of the hippocampus and dentate gyrus, and in olfactory bulb. Not detected in Purkinje cells. Highly expressed in the plexiform layers, optic fiber layer and the outer segments of the photoreceptor layer in the retina. Highly expressed in macrophages. Isoform 3 is detected at very low levels in all tissues tested.

The protein resides in the membrane. Functionally, immunoglobulin-like cell surface receptor for CD47. Acts as a docking protein and induces translocation of PTPN6, PTPN11 and other binding partners from the cytosol to the plasma membrane. Supports adhesion of cerebellar neurons, neurite outgrowth and glial cell attachment. May play a key role in intracellular signaling during synaptogenesis and in synaptic function. Involved in the negative regulation of receptor tyrosine kinase-coupled cellular responses induced by cell adhesion, growth factors or insulin. Mediates negative regulation of phagocytosis, mast cell activation and dendritic cell activation. CD47 binding prevents maturation of immature dendritic cells and inhibits cytokine production by mature dendritic cells. Plays a role in antiviral immunity and limits new world arenavirus infection by decreasing virus internalization. Receptor for THBS1. Interaction with THBS1 stimulates phosphorylation of SIRPA. In response to THBS1, involved in ROS signaling in non-phagocytic cells, stimulating NADPH oxidase-derived ROS production. The polypeptide is Tyrosine-protein phosphatase non-receptor type substrate 1 (Sirpa) (Mus musculus (Mouse)).